The chain runs to 527 residues: T-complex protein 1 subunit beta (527 aa).

Position 2 is an N-acetylserine (Ser-2).

Belongs to the TCP-1 chaperonin family. Heterooligomeric complex of about 850 to 900 kDa that forms two stacked rings, 12 to 16 nm in diameter. Interacts with PLP2; this interaction leads to inhibition of CCT complex mediated actin folding.

It is found in the cytoplasm. Molecular chaperone; assists the folding of proteins upon ATP hydrolysis. Known to play a role, in vitro, in the folding of actin and tubulin. In yeast may play a role in mitotic spindle formation. This is T-complex protein 1 subunit beta (CCT2) from Saccharomyces cerevisiae (strain ATCC 204508 / S288c) (Baker's yeast).